Consider the following 301-residue polypeptide: Homoserine O-acetyltransferase (301 aa).

The Acyl-thioester intermediate role is filled by cysteine 142. Positions 163 and 192 each coordinate substrate. The active-site Proton acceptor is histidine 235. Glutamate 237 is a catalytic residue. Arginine 249 contacts substrate.

Belongs to the MetA family.

The protein localises to the cytoplasm. The catalysed reaction is L-homoserine + acetyl-CoA = O-acetyl-L-homoserine + CoA. Its pathway is amino-acid biosynthesis; L-methionine biosynthesis via de novo pathway; O-acetyl-L-homoserine from L-homoserine: step 1/1. Transfers an acetyl group from acetyl-CoA to L-homoserine, forming acetyl-L-homoserine. The polypeptide is Homoserine O-acetyltransferase (Bacillus cytotoxicus (strain DSM 22905 / CIP 110041 / 391-98 / NVH 391-98)).